The following is a 189-amino-acid chain: dCTP deaminase (189 aa).

DCTP is bound by residues 112–117, 136–138, glutamine 157, tyrosine 171, and glutamine 181; these read KSTYAR and TLE. Residue glutamate 138 is the Proton donor/acceptor of the active site.

Belongs to the dCTP deaminase family. Homotrimer.

The enzyme catalyses dCTP + H2O + H(+) = dUTP + NH4(+). Its pathway is pyrimidine metabolism; dUMP biosynthesis; dUMP from dCTP (dUTP route): step 1/2. In terms of biological role, catalyzes the deamination of dCTP to dUTP. This chain is dCTP deaminase, found in Nitrosospira multiformis (strain ATCC 25196 / NCIMB 11849 / C 71).